The chain runs to 231 residues: Non-fluorescent flavoprotein (231 aa).

This sequence belongs to the bacterial luciferase oxidoreductase family. Homodimer. The cofactor is FMN.

The chain is Non-fluorescent flavoprotein (luxF) from Photobacterium phosphoreum.